A 294-amino-acid chain; its full sequence is N-acetylmuramic acid 6-phosphate etherase (294 aa).

Residues Thr56–Lys219 form the SIS domain. Catalysis depends on Glu84, which acts as the Proton donor. Glu115 is an active-site residue.

The protein belongs to the GCKR-like family. MurNAc-6-P etherase subfamily. Homodimer.

The catalysed reaction is N-acetyl-D-muramate 6-phosphate + H2O = N-acetyl-D-glucosamine 6-phosphate + (R)-lactate. It participates in amino-sugar metabolism; 1,6-anhydro-N-acetylmuramate degradation. The protein operates within amino-sugar metabolism; N-acetylmuramate degradation. Its pathway is cell wall biogenesis; peptidoglycan recycling. In terms of biological role, specifically catalyzes the cleavage of the D-lactyl ether substituent of MurNAc 6-phosphate, producing GlcNAc 6-phosphate and D-lactate. Together with AnmK, is also required for the utilization of anhydro-N-acetylmuramic acid (anhMurNAc) either imported from the medium or derived from its own cell wall murein, and thus plays a role in cell wall recycling. The polypeptide is N-acetylmuramic acid 6-phosphate etherase (Francisella philomiragia subsp. philomiragia (strain ATCC 25017 / CCUG 19701 / FSC 153 / O#319-036)).